A 442-amino-acid polypeptide reads, in one-letter code: G-protein coupled receptor family C group 5 member C (442 aa).

The first 23 residues, 1–23 (MAIHRTVLMCLGLPLFLLPGARA), serve as a signal peptide directing secretion. The Extracellular portion of the chain corresponds to 24 to 50 (QEQAPPGCSPDLNPLYYNLCDRSEAWG). The helical transmembrane segment at 51 to 71 (IILEAVAGAGVVTTFVLTIIL) threads the bilayer. Residues 72–85 (VASLPFVQDTKKRS) are Cytoplasmic-facing. A helical membrane pass occupies residues 86 to 106 (LLGTQVFFLLGTLGLFCLVFA). Over 107-120 (CVVKPSFSTCASRR) the chain is Extracellular. A helical transmembrane segment spans residues 121–141 (FLFGVLFAICFSCLVAHVLAL). Topologically, residues 142-155 (HFLVRKNHGPRGWV) are cytoplasmic. Residues 156 to 176 (IFLVALLLSLVEVIINTEWLI) traverse the membrane as a helical segment. Residues 177–209 (ITLVRGAGTEGDALGNGSAGWVAVSPCAIANAD) are Extracellular-facing. Asn192 carries an N-linked (GlcNAc...) asparagine glycan. Residues 210-230 (FVMALIYVMLLLLCAFSGAWS) form a helical membrane-spanning segment. Over 231-242 (ALCGRFKRWRKH) the chain is Cytoplasmic. Residues 243–263 (GVFILLTTTASIAVWVVWIVM) form a helical membrane-spanning segment. Topologically, residues 264–280 (YTYGNRQHNSPTWDDPT) are extracellular. A helical membrane pass occupies residues 281–301 (LAIALATNAWAFVLFYVIPEV). At 302 to 442 (SQVTRSSPEQ…QVFRNPYVWD (141 aa)) the chain is on the cytoplasmic side. Phosphoserine occurs at positions 345, 384, 404, and 407. Tyr415 bears the Phosphotyrosine mark. Thr424 is subject to Phosphothreonine.

It belongs to the G-protein coupled receptor 3 family.

The protein localises to the cell membrane. In terms of biological role, this retinoic acid-inducible G-protein coupled receptor provide evidence for a possible interaction between retinoid and G-protein signaling pathways. The protein is G-protein coupled receptor family C group 5 member C (GPRC5C) of Bos taurus (Bovine).